Reading from the N-terminus, the 161-residue chain is MAGILRLVVQRPPGGLQTVTKGVESLIGTDWIRHKFTKSRIPDKVFQASPEDHEKYGGDPQNPHKLHIVTRIKSTRRRPYWEKDIIKMLGLEKSHTPQVHKNIPSVNSKLKVVKHLIRIQPLKLPQGLPTEENMSNMYLKSTGELVVQWHLKPVEQKTHES.

The N-terminal 34 residues, 1–34 (MAGILRLVVQRPPGGLQTVTKGVESLIGTDWIRH), are a transit peptide targeting the mitochondrion.

It belongs to the universal ribosomal protein uL30 family. Component of the mitochondrial ribosome large subunit (39S) which comprises a 16S rRNA and about 50 distinct proteins.

The protein resides in the mitochondrion. The polypeptide is Large ribosomal subunit protein uL30m (MRPL30) (Macaca fascicularis (Crab-eating macaque)).